The sequence spans 477 residues: Aspartyl/glutamyl-tRNA(Asn/Gln) amidotransferase subunit B (477 aa).

It belongs to the GatB/GatE family. GatB subfamily. As to quaternary structure, heterotrimer of A, B and C subunits.

The enzyme catalyses L-glutamyl-tRNA(Gln) + L-glutamine + ATP + H2O = L-glutaminyl-tRNA(Gln) + L-glutamate + ADP + phosphate + H(+). It catalyses the reaction L-aspartyl-tRNA(Asn) + L-glutamine + ATP + H2O = L-asparaginyl-tRNA(Asn) + L-glutamate + ADP + phosphate + 2 H(+). Its function is as follows. Allows the formation of correctly charged Asn-tRNA(Asn) or Gln-tRNA(Gln) through the transamidation of misacylated Asp-tRNA(Asn) or Glu-tRNA(Gln) in organisms which lack either or both of asparaginyl-tRNA or glutaminyl-tRNA synthetases. The reaction takes place in the presence of glutamine and ATP through an activated phospho-Asp-tRNA(Asn) or phospho-Glu-tRNA(Gln). The chain is Aspartyl/glutamyl-tRNA(Asn/Gln) amidotransferase subunit B from Legionella pneumophila (strain Corby).